A 590-amino-acid chain; its full sequence is CTP synthase (590 aa).

The segment at 1 to 281 (MPALRKHPQT…DAYVVRRLNL (281 aa)) is amidoligase domain. S23 lines the CTP pocket. S23 is a UTP binding site. ATP is bound by residues 24-29 (SLGKGL) and D81. Residues D81 and E155 each coordinate Mg(2+). Residues 162-164 (DIE), 202-207 (KTKPTQ), and K238 contribute to the CTP site. Residues 202–207 (KTKPTQ) and K238 each bind UTP. In terms of domain architecture, Glutamine amidotransferase type-1 spans 306-554 (RIALVGKYID…IGAAIDYKAA (249 aa)). An L-glutamine-binding site is contributed by G369. The Nucleophile; for glutamine hydrolysis role is filled by C396. Residues 397-400 (LGLQ), E419, and R480 each bind L-glutamine. Active-site residues include H527 and E529.

Belongs to the CTP synthase family. Homotetramer.

The enzyme catalyses UTP + L-glutamine + ATP + H2O = CTP + L-glutamate + ADP + phosphate + 2 H(+). It catalyses the reaction L-glutamine + H2O = L-glutamate + NH4(+). The catalysed reaction is UTP + NH4(+) + ATP = CTP + ADP + phosphate + 2 H(+). It participates in pyrimidine metabolism; CTP biosynthesis via de novo pathway; CTP from UDP: step 2/2. With respect to regulation, allosterically activated by GTP, when glutamine is the substrate; GTP has no effect on the reaction when ammonia is the substrate. The allosteric effector GTP functions by stabilizing the protein conformation that binds the tetrahedral intermediate(s) formed during glutamine hydrolysis. Inhibited by the product CTP, via allosteric rather than competitive inhibition. Its function is as follows. Catalyzes the ATP-dependent amination of UTP to CTP with either L-glutamine or ammonia as the source of nitrogen. Regulates intracellular CTP levels through interactions with the four ribonucleotide triphosphates. This Mycolicibacterium smegmatis (strain ATCC 700084 / mc(2)155) (Mycobacterium smegmatis) protein is CTP synthase.